A 386-amino-acid chain; its full sequence is Succinyl-diaminopimelate desuccinylase (386 aa).

Position 72 (His72) interacts with Zn(2+). Asp74 is an active-site residue. Asp105 is a binding site for Zn(2+). Glu139 acts as the Proton acceptor in catalysis. Residues Glu140, Glu168, and His353 each coordinate Zn(2+).

It belongs to the peptidase M20A family. DapE subfamily. In terms of assembly, homodimer. The cofactor is Zn(2+). Co(2+) is required as a cofactor.

It carries out the reaction N-succinyl-(2S,6S)-2,6-diaminopimelate + H2O = (2S,6S)-2,6-diaminopimelate + succinate. It participates in amino-acid biosynthesis; L-lysine biosynthesis via DAP pathway; LL-2,6-diaminopimelate from (S)-tetrahydrodipicolinate (succinylase route): step 3/3. Functionally, catalyzes the hydrolysis of N-succinyl-L,L-diaminopimelic acid (SDAP), forming succinate and LL-2,6-diaminopimelate (DAP), an intermediate involved in the bacterial biosynthesis of lysine and meso-diaminopimelic acid, an essential component of bacterial cell walls. In Rhodospirillum centenum (strain ATCC 51521 / SW), this protein is Succinyl-diaminopimelate desuccinylase.